The following is a 157-amino-acid chain: Monooxygenase CPUR_05417 (157 aa).

This sequence belongs to the avfA family.

It functions in the pathway secondary metabolite biosynthesis. Monooxygenase; part of the ergochrome gene cluster responsible for the typical purple-black color of the ergot sclerotia. The ergochrome gene cluster produces several ergot pigments including the yellow ergochrome secalonic acid and its derivatives, as well as the red anthraquinones endocrocin and clavorubin. The pathway begins with the synthesis of atrochrysone thioester by the polyketide synthase (PKS) CPUR_05437. The atrochrysone carboxyl ACP thioesterase CPUR_05436 then breaks the thioester bond and releases the atrochrysone carboxylic acid from CPUR_05437. The atrochrysone carboxylic acid is then converted to atrochrysone which is further transformed into emodin anthrone. The next step is performed by the anthrone oxygenase CPUR_05434 that catalyzes the oxidation of emodinanthrone to emodin. Emodin is further modified to yield monodictyphenone via several steps involving CPUR_05427, CPUR_05428, CPUR_05429 and CPUR_05430. The short chain dehydrogenase/reductase CPUR_05418 then catalyzes the C-5 ketoreduction to give the xanthone skeleton of the monomeric units. Ergochromes formation requires further dimerization steps of different xanthone units, probably catalyzed by the cytochrome P450 monooxygenase CPUR_05419. CPUR_05425, CPUR_05426 and CPUR_05431 are unique to Claviceps, thus it is likely that they are involved in further modification of xanthone units or in their dimerization. The yellow ergochromes and the red anthraquinone pigments endocrocin and clavorubin are products from the same PKS derived precursors and the latter are likely shunt products in the pathway of xanthone biosynthesis. It is proposed that atrochrysone carboxylic acid released from the PKS CPUR_05437 can also be converted to endocrocin anthrone which is further oxidized into endocrocin by CPUR_05435. Endocrocin could be then modified to clavorubin, possibly by CPUR_05423 and CPUR_05431. Clavorubin is the principal anthraquinone metabolite produced by the cluster with a much higher yield compared to endocrocin. The polypeptide is Monooxygenase CPUR_05417 (Claviceps purpurea (strain 20.1) (Ergot fungus)).